Here is a 499-residue protein sequence, read N- to C-terminus: Glycerol kinase (499 aa).

Thr-13 contributes to the ADP binding site. The ATP site is built by Thr-13, Thr-14, and Ser-15. Thr-13 contributes to the sn-glycerol 3-phosphate binding site. Arg-17 is a binding site for ADP. Sn-glycerol 3-phosphate contacts are provided by Arg-83, Glu-84, Tyr-135, and Asp-245. Positions 83, 84, 135, 245, and 246 each coordinate glycerol. ADP contacts are provided by Thr-267 and Gly-310. 4 residues coordinate ATP: Thr-267, Gly-310, Gln-314, and Gly-411. ADP is bound by residues Gly-411 and Asn-415.

Belongs to the FGGY kinase family.

It catalyses the reaction glycerol + ATP = sn-glycerol 3-phosphate + ADP + H(+). It functions in the pathway polyol metabolism; glycerol degradation via glycerol kinase pathway; sn-glycerol 3-phosphate from glycerol: step 1/1. With respect to regulation, inhibited by fructose 1,6-bisphosphate (FBP). Key enzyme in the regulation of glycerol uptake and metabolism. Catalyzes the phosphorylation of glycerol to yield sn-glycerol 3-phosphate. The polypeptide is Glycerol kinase (Stenotrophomonas maltophilia (strain K279a)).